The following is a 167-amino-acid chain: Ribosome maturation factor RimM (167 aa).

The region spanning 94-165 (ENEFYYSDII…KIIITPMEGL (72 aa)) is the PRC barrel domain.

This sequence belongs to the RimM family. Binds ribosomal protein uS19.

The protein resides in the cytoplasm. Its function is as follows. An accessory protein needed during the final step in the assembly of 30S ribosomal subunit, possibly for assembly of the head region. Essential for efficient processing of 16S rRNA. May be needed both before and after RbfA during the maturation of 16S rRNA. It has affinity for free ribosomal 30S subunits but not for 70S ribosomes. This is Ribosome maturation factor RimM from Staphylococcus aureus (strain NCTC 8325 / PS 47).